We begin with the raw amino-acid sequence, 121 residues long: MARIAGVDIPNDKRVVVSLTYVYGIGLPTSKKILAAAGVSEDVRVKDLTPDQEDAIRREVDAIKVEGDLRREVNLNIKRLMEIGSYRGIRHRRGLPVRGQNTKNNARTRKGKAVAIAGKKK.

Residues 96–121 (PVRGQNTKNNARTRKGKAVAIAGKKK) are disordered. The span at 106–121 (ARTRKGKAVAIAGKKK) shows a compositional bias: basic residues.

Belongs to the universal ribosomal protein uS13 family. As to quaternary structure, part of the 30S ribosomal subunit. Forms a loose heterodimer with protein S19. Forms two bridges to the 50S subunit in the 70S ribosome.

Located at the top of the head of the 30S subunit, it contacts several helices of the 16S rRNA. In the 70S ribosome it contacts the 23S rRNA (bridge B1a) and protein L5 of the 50S subunit (bridge B1b), connecting the 2 subunits; these bridges are implicated in subunit movement. Contacts the tRNAs in the A and P-sites. The sequence is that of Small ribosomal subunit protein uS13 from Streptococcus gordonii (strain Challis / ATCC 35105 / BCRC 15272 / CH1 / DL1 / V288).